Reading from the N-terminus, the 518-residue chain is Serine hydroxymethyltransferase, mitochondrial (518 aa).

Residues 1–31 (MAMAMALRKLSSSVNKSSRPLFSASSLYYKS) constitute a mitochondrion transit peptide. Position 287 is an N6-(pyridoxal phosphate)lysine (lysine 287).

This sequence belongs to the SHMT family. As to quaternary structure, homotetramer. Pyridoxal 5'-phosphate is required as a cofactor.

The protein localises to the mitochondrion. It catalyses the reaction (6R)-5,10-methylene-5,6,7,8-tetrahydrofolate + glycine + H2O = (6S)-5,6,7,8-tetrahydrofolate + L-serine. It functions in the pathway one-carbon metabolism; tetrahydrofolate interconversion. In terms of biological role, catalyzes the interconversion of serine and glycine. The protein is Serine hydroxymethyltransferase, mitochondrial of Pisum sativum (Garden pea).